Reading from the N-terminus, the 268-residue chain is Phosphatidylcholine synthase (268 aa).

At methionine 1–arginine 27 the chain is on the cytoplasmic side. The helical transmembrane segment at alanine 28–alanine 48 threads the bilayer. The Periplasmic portion of the chain corresponds to alanine 49–arginine 53. Residues tryptophan 54–isoleucine 74 form a helical membrane-spanning segment. The Cytoplasmic segment spans residues alanine 75–serine 88. A helical membrane pass occupies residues glycine 89–leucine 109. Residues tyrosine 110 to arginine 112 lie on the Periplasmic side of the membrane. Residues glycine 113 to isoleucine 133 traverse the membrane as a helical segment. Residues tyrosine 134 to asparagine 145 are Cytoplasmic-facing. The helical transmembrane segment at phenylalanine 146–proline 166 threads the bilayer. The Periplasmic segment spans residues glycine 167 to glutamine 168. Residues tryptophan 169–isoleucine 189 form a helical membrane-spanning segment. Residues histidine 190–threonine 203 are Cytoplasmic-facing. The chain crosses the membrane as a helical span at residues methionine 204–phenylalanine 224. Over tyrosine 225–lysine 240 the chain is Periplasmic. A helical transmembrane segment spans residues isoleucine 241 to proline 261. Residues asparagine 262 to alanine 268 lie on the Cytoplasmic side of the membrane.

This sequence belongs to the CDP-alcohol phosphatidyltransferase class-I family. It depends on Mn(2+) as a cofactor.

Its subcellular location is the cell inner membrane. The catalysed reaction is a CDP-1,2-diacyl-sn-glycerol + choline = a 1,2-diacyl-sn-glycero-3-phosphocholine + CMP + H(+). In terms of biological role, condenses choline with CDP-diglyceride to produce phosphatidylcholine and CMP. This Mesorhizobium japonicum (strain LMG 29417 / CECT 9101 / MAFF 303099) (Mesorhizobium loti (strain MAFF 303099)) protein is Phosphatidylcholine synthase (pcs).